A 146-amino-acid polypeptide reads, in one-letter code: Large ribosomal subunit protein uL15 (146 aa).

2 stretches are compositionally biased toward basic residues: residues 1 to 13 and 22 to 38; these read MIRKRRKITRMRG and SKKRRGAGHRGGRGQAG. Residues 1 to 38 form a disordered region; it reads MIRKRRKITRMRGSRTVGGGCSKKRRGAGHRGGRGQAG.

Belongs to the universal ribosomal protein uL15 family. As to quaternary structure, part of the 50S ribosomal subunit.

Binds to the 23S rRNA. The protein is Large ribosomal subunit protein uL15 of Methanothermobacter thermautotrophicus (strain ATCC 29096 / DSM 1053 / JCM 10044 / NBRC 100330 / Delta H) (Methanobacterium thermoautotrophicum).